Reading from the N-terminus, the 598-residue chain is Peroxisomal multifunctional enzyme type 2 (598 aa).

Residues 1-309 (MSSSDGKLRY…LEVLEKLKEG (309 aa)) form a (3R)-hydroxyacyl-CoA dehydrogenase region. NAD(+) contacts are provided by residues 16 to 40 (VVTG…AKVV), L24, D43, 78 to 79 (SV), and N102. S154 serves as a coordination point for substrate. Y167 acts as the Proton acceptor in catalysis. Residues 167–171 (YTAAK) and 199–202 (AASR) each bind NAD(+). The interval 310–598 (GGDAIEDAFE…VDLKSSQAKL (289 aa)) is enoyl-CoA hydratase 2. Residues 390–391 (HG), K419, 496–501 (DKNPLH), G519, and F549 each bind (3R)-3-hydroxydecanoyl-CoA. One can recognise a MaoC-like domain in the interval 469-586 (PAPNRQPDAT…VETGKEVISG (118 aa)). A Microbody targeting signal motif is present at residues 596–598 (AKL).

The protein belongs to the short-chain dehydrogenases/reductases (SDR) family. As to quaternary structure, homodimer.

It is found in the peroxisome. It catalyses the reaction a (3R)-3-hydroxyacyl-CoA + NAD(+) = a 3-oxoacyl-CoA + NADH + H(+). It carries out the reaction a (3R)-3-hydroxyacyl-CoA = a (2E)-enoyl-CoA + H2O. The protein operates within lipid metabolism; fatty acid beta-oxidation. Bifunctional enzyme acting on the peroxisomal beta-oxidation pathway for fatty acids. The sequence is that of Peroxisomal multifunctional enzyme type 2 from Drosophila melanogaster (Fruit fly).